A 694-amino-acid chain; its full sequence is PTS system fructose-specific EIIABC component (694 aa).

A PTS EIIA type-2 domain is found at 4 to 149 (PLLSAELFFN…NGLINLIDSF (146 aa)). His-68 (tele-phosphohistidine intermediate; for EIIA activity) is an active-site residue. The residue at position 68 (His-68) is a Phosphohistidine; by HPr. One can recognise a PTS EIIB type-2 domain in the interval 179-275 (FVAVTACPTG…PQTVYDQVVK (97 aa)). Residue Cys-185 is the Phosphocysteine intermediate; for EIIB activity of the active site. Cys-185 carries the post-translational modification Phosphocysteine; by EIIA. One can recognise a PTS EIIC type-2 domain in the interval 310-687 (IYRAILSGVS…NLLVVRKKTK (378 aa)). 10 helical membrane passes run 318–338 (VSYMLPFVVFGGILIAIAFLI), 364–384 (GGLSFGLIVPILSAYIAFALV), 390–410 (LPGFIVGLISAGKFLLNIDIV), 422–442 (VSSGFFGAIFGGLLAAVLIIV), 461–481 (ILFIPLLGTLVTAALFWVINI), 502–522 (LAPLLGLVIGLMMCFDLGGPV), 542–562 (VAMASAILSGMVPPLGIAIAA), 576–596 (AAYACYVMGLSFISEGAIPFV), 602–622 (IMLAANLIGGAVCGVLTGAFA), and 655–675 (GVGLALLALIVSSFISAGIII).

Its subcellular location is the cell membrane. The catalysed reaction is D-fructose(out) + N(pros)-phospho-L-histidyl-[protein] = D-fructose 1-phosphate(in) + L-histidyl-[protein]. In terms of biological role, the phosphoenolpyruvate-dependent sugar phosphotransferase system (sugar PTS), a major carbohydrate active transport system, catalyzes the phosphorylation of incoming sugar substrates concomitantly with their translocation across the cell membrane. This system is involved in fructose transport. The chain is PTS system fructose-specific EIIABC component from Mycoplasma pneumoniae (strain ATCC 29342 / M129 / Subtype 1) (Mycoplasmoides pneumoniae).